The sequence spans 239 residues: Major prion protein (239 aa).

The signal sequence occupies residues 1-15 (MLVLFVATWSDLGLC). The tract at residues 15–98 (CKKRPKPGGW…NQWNKPSKPK (84 aa)) is disordered. The interval 16 to 31 (KKRPKPGGWNTGGSRY) is interaction with ADGRG6. An interaction with GRB2, ERI3 and SYN1 region spans residues 16 to 222 (KKRPKPGGWN…ESQAYYQRGS (207 aa)). Tandem repeats lie at residues 44-51 (PQSGGWGQ), 52-59 (PHGGGWGQ), 60-67 (PHGGGWGQ), 68-75 (PHGGGWGQ), and 76-83 (PHGGGWGQ). Positions 44 to 83 (PQSGGWGQPHGGGWGQPHGGGWGQPHGGGWGQPHGGGWGQ) are 5 X 8 AA tandem repeats of P-H-G-G-G-W-G-Q. Residues 47–87 (GGWGQPHGGGWGQPHGGGWGQPHGGGWGQPHGGGWGQGGGT) are compositionally biased toward gly residues. Residues His-53, Gly-54, Gly-55, His-61, Gly-62, Gly-63, His-69, Gly-70, Gly-71, His-77, Gly-78, and Gly-79 each contribute to the Cu(2+) site. Cys-171 and Cys-206 are disulfide-bonded. Asn-173 and Asn-189 each carry an N-linked (GlcNAc...) asparagine glycan. Ser-222 carries the GPI-anchor amidated serine lipid modification. Residues 223–239 (SMVLFSSPPVILLISFL) constitute a propeptide, removed in mature form.

This sequence belongs to the prion family. As to quaternary structure, monomer and homodimer. Has a tendency to aggregate into amyloid fibrils containing a cross-beta spine, formed by a steric zipper of superposed beta-strands. Soluble oligomers may represent an intermediate stage on the path to fibril formation. Copper binding may promote oligomerization. Interacts with GRB2, APP, ERI3/PRNPIP and SYN1. Mislocalized cytosolically exposed PrP interacts with MGRN1; this interaction alters MGRN1 subcellular location and causes lysosomal enlargement. Interacts with APP. Interacts with KIAA1191. Interacts with ADGRG6.

It localises to the cell membrane. The protein localises to the golgi apparatus. In terms of biological role, its primary physiological function is unclear. May play a role in neuronal development and synaptic plasticity. May be required for neuronal myelin sheath maintenance. May promote myelin homeostasis through acting as an agonist for ADGRG6 receptor. May play a role in iron uptake and iron homeostasis. Soluble oligomers are toxic to cultured neuroblastoma cells and induce apoptosis (in vitro). Association with GPC1 (via its heparan sulfate chains) targets PRNP to lipid rafts. Also provides Cu(2+) or Zn(2+) for the ascorbate-mediated GPC1 deaminase degradation of its heparan sulfate side chains. The chain is Major prion protein (PRNP) from Aotus trivirgatus (Three-striped night monkey).